We begin with the raw amino-acid sequence, 233 residues long: Large ribosomal subunit protein mL67 (233 aa).

Positions 214–233 are disordered; sequence RQQAQQSEQQSQSELESQTA. The segment covering 215–233 has biased composition (low complexity); the sequence is QQAQQSEQQSQSELESQTA.

This sequence belongs to the mitochondrion-specific ribosomal protein mL67 family.

The protein resides in the nucleus. The protein localises to the mitochondrion. In terms of biological role, transcription factor involved in regulation of RNA polymerase II-dependent transcription. Also involved in regulation of mitochondrial DNA recombination, maintenance and repair, and generation of homoplasmic cells. The protein is Large ribosomal subunit protein mL67 (MHR1) of Debaryomyces hansenii (strain ATCC 36239 / CBS 767 / BCRC 21394 / JCM 1990 / NBRC 0083 / IGC 2968) (Yeast).